Consider the following 77-residue polypeptide: NAD(P)H-quinone oxidoreductase subunit L (77 aa).

A run of 2 helical transmembrane segments spans residues 12-32 and 47-67; these read LIAYMGVITIYLLVIPLLLFY and LGIYGLVFLFFPGLILFSPFL.

It belongs to the complex I NdhL subunit family. As to quaternary structure, NDH-1 can be composed of about 15 different subunits; different subcomplexes with different compositions have been identified which probably have different functions.

The protein resides in the cellular thylakoid membrane. It catalyses the reaction a plastoquinone + NADH + (n+1) H(+)(in) = a plastoquinol + NAD(+) + n H(+)(out). The enzyme catalyses a plastoquinone + NADPH + (n+1) H(+)(in) = a plastoquinol + NADP(+) + n H(+)(out). Its function is as follows. NDH-1 shuttles electrons from an unknown electron donor, via FMN and iron-sulfur (Fe-S) centers, to quinones in the respiratory and/or the photosynthetic chain. The immediate electron acceptor for the enzyme in this species is believed to be plastoquinone. Couples the redox reaction to proton translocation, and thus conserves the redox energy in a proton gradient. Cyanobacterial NDH-1 also plays a role in inorganic carbon-concentration. The polypeptide is NAD(P)H-quinone oxidoreductase subunit L (Prochlorococcus marinus (strain MIT 9312)).